The chain runs to 209 residues: Superoxide dismutase [Mn/Fe] (209 aa).

Fe(3+)-binding residues include histidine 38, histidine 90, aspartate 172, and histidine 176. 4 residues coordinate Mn(2+): histidine 38, histidine 90, aspartate 172, and histidine 176.

The protein belongs to the iron/manganese superoxide dismutase family. The cofactor is Mn(2+). It depends on Fe(3+) as a cofactor.

The catalysed reaction is 2 superoxide + 2 H(+) = H2O2 + O2. Destroys superoxide anion radicals which are normally produced within the cells and which are toxic to biological systems. Catalyzes the dismutation of superoxide anion radicals into O2 and H2O2 by successive reduction and oxidation of the transition metal ion at the active site. The chain is Superoxide dismutase [Mn/Fe] (sodB) from Rickettsia bellii (strain RML369-C).